A 246-amino-acid polypeptide reads, in one-letter code: Phosphomannomutase (246 aa).

Asp-13 functions as the Nucleophile in the catalytic mechanism. Asp-13 and Asp-15 together coordinate Mg(2+). Asp-15 acts as the Proton donor/acceptor in catalysis. Residues Arg-22, Arg-124, Arg-135, Arg-142, Ser-180, and Asp-182 each contribute to the alpha-D-mannose 1-phosphate site. Positions 208, 220, and 225 each coordinate Mg(2+).

Belongs to the eukaryotic PMM family. Homodimer. Requires Mg(2+) as cofactor. In terms of tissue distribution, expressed in roots, stems, leaves, flowers and immature fruits.

It is found in the cytoplasm. The catalysed reaction is alpha-D-mannose 1-phosphate = D-mannose 6-phosphate. It functions in the pathway nucleotide-sugar biosynthesis; GDP-alpha-D-mannose biosynthesis; alpha-D-mannose 1-phosphate from D-fructose 6-phosphate: step 2/2. Its function is as follows. Catalyzes the interconversion of mannose-6-phosphate to mannose-1-phosphate, the precursor for the synthesis of GDP-mannose. GDP-mannose is an essential sugar nucleotide for the synthesis of D-mannose-containing cell wall polysaccharides (galactomannans and glucomannans), glycolipids, glycoproteins and the antioxidant L-ascorbate. Can complement the yeast temperature-sensitive mutant sec53-6. The sequence is that of Phosphomannomutase from Arabidopsis thaliana (Mouse-ear cress).